The sequence spans 74 residues: Large ribosomal subunit protein uL30 (74 aa).

Belongs to the universal ribosomal protein uL30 family. In terms of assembly, part of the 50S ribosomal subunit.

This Koribacter versatilis (strain Ellin345) protein is Large ribosomal subunit protein uL30.